Here is a 230-residue protein sequence, read N- to C-terminus: Type II restriction enzyme SinI (230 aa).

It catalyses the reaction Endonucleolytic cleavage of DNA to give specific double-stranded fragments with terminal 5'-phosphates.. In terms of biological role, a P subtype restriction enzyme that recognizes the double-stranded sequence 5'-GGWCC-3' and cleaves after G-1. The chain is Type II restriction enzyme SinI (sinIR) from Salmonella infantis.